The chain runs to 204 residues: Urease accessory protein UreG (204 aa).

12 to 19 (GPVGSGKT) contributes to the GTP binding site.

The protein belongs to the SIMIBI class G3E GTPase family. UreG subfamily. In terms of assembly, homodimer. UreD, UreF and UreG form a complex that acts as a GTP-hydrolysis-dependent molecular chaperone, activating the urease apoprotein by helping to assemble the nickel containing metallocenter of UreC. The UreE protein probably delivers the nickel.

The protein localises to the cytoplasm. Facilitates the functional incorporation of the urease nickel metallocenter. This process requires GTP hydrolysis, probably effectuated by UreG. In Pseudomonas fluorescens (strain SBW25), this protein is Urease accessory protein UreG.